The primary structure comprises 140 residues: uncharacterized protein (140 aa).

The HTH cro/C1-type domain maps to 26–80 (IRSQRETAHVSMRQLAERSGVSNPYLSQVERGLRKPSADVLSQIAKALRVSAEVL). Residues 37-56 (MRQLAERSGVSNPYLSQVER) constitute a DNA-binding region (H-T-H motif).

This is an uncharacterized protein from Mycobacterium tuberculosis (strain ATCC 25618 / H37Rv).